A 151-amino-acid chain; its full sequence is Ribosome maturation factor RimP (151 aa).

Belongs to the RimP family.

The protein localises to the cytoplasm. In terms of biological role, required for maturation of 30S ribosomal subunits. The chain is Ribosome maturation factor RimP from Shewanella amazonensis (strain ATCC BAA-1098 / SB2B).